We begin with the raw amino-acid sequence, 238 residues long: Purine nucleoside phosphorylase DeoD-type (238 aa).

Position 4 (H4) interacts with a purine D-ribonucleoside. Residues G20, R24, R43, and 87 to 90 (RVGS) each bind phosphate. A purine D-ribonucleoside contacts are provided by residues 179 to 181 (EME) and 203 to 204 (SD). The Proton donor role is filled by D204.

Belongs to the PNP/UDP phosphorylase family. In terms of assembly, homohexamer; trimer of homodimers.

It carries out the reaction a purine D-ribonucleoside + phosphate = a purine nucleobase + alpha-D-ribose 1-phosphate. It catalyses the reaction a purine 2'-deoxy-D-ribonucleoside + phosphate = a purine nucleobase + 2-deoxy-alpha-D-ribose 1-phosphate. In terms of biological role, catalyzes the reversible phosphorolytic breakdown of the N-glycosidic bond in the beta-(deoxy)ribonucleoside molecules, with the formation of the corresponding free purine bases and pentose-1-phosphate. The sequence is that of Purine nucleoside phosphorylase DeoD-type from Haemophilus influenzae (strain PittEE).